The following is a 320-amino-acid chain: Malate dehydrogenase (320 aa).

Residues 10 to 15 (GAGQIG) and D34 contribute to the NAD(+) site. The substrate site is built by R83 and R89. NAD(+)-binding positions include N96 and 119–121 (ITN). Residues N121 and R152 each contribute to the substrate site. Catalysis depends on H176, which acts as the Proton acceptor.

It belongs to the LDH/MDH superfamily. MDH type 3 family.

It catalyses the reaction (S)-malate + NAD(+) = oxaloacetate + NADH + H(+). Functionally, catalyzes the reversible oxidation of malate to oxaloacetate. The chain is Malate dehydrogenase from Ruegeria pomeroyi (strain ATCC 700808 / DSM 15171 / DSS-3) (Silicibacter pomeroyi).